The following is a 508-amino-acid chain: Amphoterin-induced protein 3 (508 aa).

The signal sequence occupies residues 1 to 19 (MAWLVLLGLLLCMLGAGSG). The Extracellular portion of the chain corresponds to 20-383 (TSDLEGVLPP…PRPEPEAFNT (364 aa)). Residues 25–61 (GVLPPDPHNCPNKCVCAADVLSCAGRGLQDLPAALPA) enclose the LRRNT domain. 2 disulfides stabilise this stretch: cysteine 34–cysteine 40 and cysteine 38–cysteine 47. LRR repeat units lie at residues 62 to 83 (TAAE…WLAP), 86 to 107 (RLRA…VFTN), 110 to 131 (GLRI…DLDG), 134 to 155 (ELEK…AFQG), 158 to 178 (MLSH…NHLH), and 184 to 207 (RLRT…AALP). The N-linked (GlcNAc...) asparagine glycan is linked to asparagine 107. An LRRCT domain is found at 219 to 275 (NPLPCDCSLYHLLRRWHQRGLSALHDFEREYTCLAFKVAESRVRFFEHSRVFKNCSV). 3 cysteine pairs are disulfide-bonded: cysteine 223–cysteine 251, cysteine 225–cysteine 273, and cysteine 300–cysteine 352. Asparagine 272, asparagine 301, asparagine 362, and asparagine 368 each carry an N-linked (GlcNAc...) asparagine glycan. Residues 279 to 370 (PGLELPEEEL…HNQTLEYNVS (92 aa)) enclose the Ig-like C2-type domain. The chain crosses the membrane as a helical span at residues 384–404 (GFTTLLGCIVGLVLVLLYLFA). At 405–508 (PPCRGCCRCC…STGSEGLMMS (104 aa)) the chain is on the cytoplasmic side.

The protein belongs to the immunoglobulin superfamily. AMIGO family. Binds AMIGO1 or AMIGO2.

It is found in the membrane. Its function is as follows. May mediate heterophilic cell-cell interaction. May contribute to signal transduction through its intracellular domain. The sequence is that of Amphoterin-induced protein 3 from Rattus norvegicus (Rat).